The primary structure comprises 275 residues: Homeobox protein Hox-C12a (275 aa).

2 disordered regions span residues 101–129 (SREN…DHGM) and 148–213 (QLTQ…KRKP). Positions 155 to 177 (SCQSMESDSSSSLLNEASKPSSS) are enriched in low complexity. A compositionally biased stretch (polar residues) spans 178–194 (DTQTLVSPGSHTGTITA). A DNA-binding region (homeobox) is located at residues 207 to 266 (TRKKRKPYSKLQLAELEGEFMMNEFITRQRRRELSDRLNLSDQQVKIWFQNRRMKKKRLM).

The protein belongs to the Abd-B homeobox family.

Its subcellular location is the nucleus. In terms of biological role, sequence-specific transcription factor which is part of a developmental regulatory system that provides cells with specific positional identities on the anterior-posterior axis. In Takifugu rubripes (Japanese pufferfish), this protein is Homeobox protein Hox-C12a (hoxc12a).